A 62-amino-acid polypeptide reads, in one-letter code: Small ribosomal subunit protein eS27 (62 aa).

Cys17, Cys20, Cys36, and Cys39 together coordinate Zn(2+). Residues 17–39 (CPDCENEQLVFEKATSVVECTVC) form a C4-type zinc finger.

This sequence belongs to the eukaryotic ribosomal protein eS27 family. In terms of assembly, part of the 30S ribosomal subunit. It depends on Zn(2+) as a cofactor.

The chain is Small ribosomal subunit protein eS27 from Methanocorpusculum labreanum (strain ATCC 43576 / DSM 4855 / Z).